Consider the following 285-residue polypeptide: Ribosomal RNA small subunit methyltransferase A (285 aa).

6 residues coordinate S-adenosyl-L-methionine: Asn-21, Leu-23, Gly-48, Glu-69, Asp-94, and Asn-127.

This sequence belongs to the class I-like SAM-binding methyltransferase superfamily. rRNA adenine N(6)-methyltransferase family. RsmA subfamily.

Its subcellular location is the cytoplasm. The enzyme catalyses adenosine(1518)/adenosine(1519) in 16S rRNA + 4 S-adenosyl-L-methionine = N(6)-dimethyladenosine(1518)/N(6)-dimethyladenosine(1519) in 16S rRNA + 4 S-adenosyl-L-homocysteine + 4 H(+). Functionally, specifically dimethylates two adjacent adenosines (A1518 and A1519) in the loop of a conserved hairpin near the 3'-end of 16S rRNA in the 30S particle. May play a critical role in biogenesis of 30S subunits. The polypeptide is Ribosomal RNA small subunit methyltransferase A (Koribacter versatilis (strain Ellin345)).